A 254-amino-acid chain; its full sequence is Winged helix repair factor 1 (254 aa).

Residues 4–21 (KRHHLIPETFGVKRRRKR) carry the Bipartite nuclear localization signal motif. Winged helix domain regions lie at residues 32-104 (EPGS…GIIF), 120-179 (PYAG…LAVP), and 180-254 (GAGR…LPET).

Belongs to the STK19 family. In terms of assembly, monomer in solution. Homodimer; when bound to DNA. Component of a transcription-coupled nucleotide excision repair (TC-NER) complex composed of STK19, ERCC6, ERCC8, DDA1, DDB1, ELOF1 and UVSSA which assembles and interacts with the multiprotein RNA polymerase II complex when it stalls at DNA lesions. Monocytes, hepatocytes, epithelial cells, T- and B-lymphocytes.

It is found in the nucleus. The protein resides in the cytoplasm. In terms of biological role, DNA-binding protein which is required for efficient transcription-coupled nucleotide excision repair (TC-NER). Acts as part of a TC-NER complex which assembles and interacts with RNA polymerase II (RNAPII) when it stalls at DNA lesions. TC-NER complex subunit UVSSA binds to the GTF2H1/p62 subunit of the TFIIH transcription factor complex, tethering TFIIH to the TC-NER complex. WHR1/STK19 then interacts with the XPD helicase subunit of TFIIH which guides TFIIH to DNA downstream of the stalled RNAPII, ensuring DNA repair. Directly interacts with RNAPII and also binds to downstream DNA. Promotes the timely removal of DNA damage-stalled RNAPII, allowing downstream NER factors to access DNA lesions. Required for monoubiquitination of UVSSA. Regulates repositioning and stabilization of UVSSA within the TC-NER complex. Stimulates ubiquitination of RNAPII complex member RBP1. Also binds to RNA and regulates the expression levels of many mRNAs. The protein is Winged helix repair factor 1 of Homo sapiens (Human).